The sequence spans 288 residues: Ankyrin repeat and SOCS box protein 8 (288 aa).

Phosphoserine is present on S17. 4 ANK repeats span residues 52-81 (GTLK…EVNA), 85-113 (YNRT…NPNA), 117-146 (NRDT…SVNA), and 150-179 (NNDT…EVRV). One can recognise an SOCS box domain in the interval 235–288 (QLCEKLTVLCSAPGTLKTLARYAVRRSLGLQYLPDAVKGLPLPVSLKDYLLLLE).

It belongs to the ankyrin SOCS box (ASB) family. In terms of assembly, interacts with TBK1; this interaction promotes TBK1 proteasomal degradation. Post-translationally, phosphorylated by TBK1.

It is found in the cytoplasm. Its pathway is protein modification; protein ubiquitination. May be a substrate-recognition component of a SCF-like ECS (Elongin-Cullin-SOCS-box protein) E3 ubiquitin-protein ligase complex which mediates the ubiquitination and subsequent proteasomal degradation of target proteins. Inhibits IFN-beta production through the IRF3 signaling pathway by targeting TBK1 via 'Lys-48'-linked ubiquitination, leading to its proteasomal degradation. This chain is Ankyrin repeat and SOCS box protein 8 (Asb8), found in Mus musculus (Mouse).